The chain runs to 63 residues: Protein Wfdc21 (63 aa).

The N-terminal stretch at 1-24 is a signal peptide; the sequence is MKLGAFLLLVSLITLSLEVQELQA. Positions 25-63 constitute a WAP; atypical domain; it reads AVRPLQLLGTCAELCRGDWDCGPEEQCVSIGCSHICTTN. Intrachain disulfides connect C35–C56, C39–C51, and C45–C60.

In terms of tissue distribution, predominantly expressed in white adipose tissue and liver.

The protein resides in the secreted. Its function is as follows. May promote activation of the metalloproteinase MMP2. In Mus musculus (Mouse), this protein is Protein Wfdc21.